The following is a 427-amino-acid chain: Serine--tRNA ligase (427 aa).

Residue 231-233 (TAE) coordinates L-serine. Residues 262 to 264 (RRE) and Val-278 each bind ATP. Glu-285 is a binding site for L-serine. Residue 349 to 352 (EVSS) coordinates ATP. Residue Ser-384 coordinates L-serine.

Belongs to the class-II aminoacyl-tRNA synthetase family. Type-1 seryl-tRNA synthetase subfamily. In terms of assembly, homodimer. The tRNA molecule binds across the dimer.

It is found in the cytoplasm. It carries out the reaction tRNA(Ser) + L-serine + ATP = L-seryl-tRNA(Ser) + AMP + diphosphate + H(+). It catalyses the reaction tRNA(Sec) + L-serine + ATP = L-seryl-tRNA(Sec) + AMP + diphosphate + H(+). It participates in aminoacyl-tRNA biosynthesis; selenocysteinyl-tRNA(Sec) biosynthesis; L-seryl-tRNA(Sec) from L-serine and tRNA(Sec): step 1/1. In terms of biological role, catalyzes the attachment of serine to tRNA(Ser). Is also able to aminoacylate tRNA(Sec) with serine, to form the misacylated tRNA L-seryl-tRNA(Sec), which will be further converted into selenocysteinyl-tRNA(Sec). This chain is Serine--tRNA ligase, found in Chlamydia pneumoniae (Chlamydophila pneumoniae).